We begin with the raw amino-acid sequence, 248 residues long: MLTKRTHPMIGKISELLVGVNRSTAAPFFDVLMTSPKSPLDFKILPQISQRNSSKRFYDDNLGGSVGLGIVAALENSNTRRITSVCRSEPNQPGRSDPVQFMSHGGSTDGEDEEMFIMDEEDYTLVTCHHGPSGSCNTRVYDKDGFECFSSKINDDRRERLFVVDVVTESPENSPEFQGLGFLNSCYLCRKKLHGQDIFIYRGEKAFCSTECRSSHIANDERKERCRSKFSTSPYTAGQIFSTGVLVT.

The span at Val-85–Gly-94 shows a compositional bias: polar residues. The tract at residues Val-85–Thr-108 is disordered. The segment at Gly-181–Glu-224 adopts an FLZ-type zinc-finger fold.

Belongs to the FLZ family. As to quaternary structure, interacts with KIN10 and KIN11 via its FLZ-type zinc finger domain. Interacts with KINB1, KINB2 and KINB3 via its N-terminal part.

The protein localises to the cytoplasm. The protein resides in the nucleus. In terms of biological role, may act as an adapter to facilitate the interaction of SnRK1 complex with effector proteins, conferring tissue- and stimulus-type specific differences in the SnRK1 regulation pathway. In Arabidopsis thaliana (Mouse-ear cress), this protein is FCS-Like Zinc finger 14.